Consider the following 299-residue polypeptide: Probable endonuclease 4 (299 aa).

Zn(2+) is bound by residues histidine 69, histidine 110, glutamate 145, aspartate 179, histidine 182, histidine 214, aspartate 227, histidine 229, and glutamate 259.

This sequence belongs to the AP endonuclease 2 family. It depends on Zn(2+) as a cofactor.

The catalysed reaction is Endonucleolytic cleavage to 5'-phosphooligonucleotide end-products.. Functionally, endonuclease IV plays a role in DNA repair. It cleaves phosphodiester bonds at apurinic or apyrimidinic (AP) sites, generating a 3'-hydroxyl group and a 5'-terminal sugar phosphate. The chain is Probable endonuclease 4 from Geobacillus kaustophilus (strain HTA426).